The following is a 184-amino-acid chain: C-phycoerythrin beta chain (184 aa).

Residues cysteine 48 and cysteine 59 each contribute to the (2R,3E)-phycoerythrobilin site. The residue at position 70 (asparagine 70) is an N4-methylasparagine. (2R,3E)-phycoerythrobilin contacts are provided by cysteine 80 and cysteine 165.

It belongs to the phycobiliprotein family. As to quaternary structure, heterodimer of an alpha and a beta chain. Contains three covalently linked bilin chromophores.

The protein resides in the cellular thylakoid membrane. Functionally, light-harvesting photosynthetic bile pigment-protein from the phycobiliprotein complex. This is C-phycoerythrin beta chain (cpeB) from Microchaete diplosiphon (Fremyella diplosiphon).